Consider the following 457-residue polypeptide: UDP-glucosyltransferase 45 (457 aa).

Histidine 21 serves as the catalytic Proton acceptor. Histidine 21 serves as a coordination point for an anthocyanidin. The active-site Charge relay is the aspartate 112. 9 residues coordinate UDP-alpha-D-glucose: threonine 134, glutamine 336, histidine 351, tryptophan 354, asparagine 355, serine 356, glutamate 359, aspartate 375, and glutamine 376.

It belongs to the UDP-glycosyltransferase family.

The enzyme catalyses (20S)-protopanaxadiol + UDP-alpha-D-glucose = (20S)-ginsenoside Rh2 + UDP + H(+). The protein operates within secondary metabolite biosynthesis; terpenoid biosynthesis. In terms of biological role, component of the triterpene saponins (e.g. PPD-type ginsenosides) biosynthetic pathway. Glycosyltransferase that catalyzes the biosynthesis of ginsenoside Rh2 from protopanaxadiol (PPD). This is UDP-glucosyltransferase 45 from Panax ginseng (Korean ginseng).